The sequence spans 317 residues: tRNA(Ile)-lysidine synthase (317 aa).

32–37 (SGGVDS) contributes to the ATP binding site.

This sequence belongs to the tRNA(Ile)-lysidine synthase family.

It localises to the cytoplasm. The catalysed reaction is cytidine(34) in tRNA(Ile2) + L-lysine + ATP = lysidine(34) in tRNA(Ile2) + AMP + diphosphate + H(+). Ligates lysine onto the cytidine present at position 34 of the AUA codon-specific tRNA(Ile) that contains the anticodon CAU, in an ATP-dependent manner. Cytidine is converted to lysidine, thus changing the amino acid specificity of the tRNA from methionine to isoleucine. The chain is tRNA(Ile)-lysidine synthase from Aquifex aeolicus (strain VF5).